We begin with the raw amino-acid sequence, 262 residues long: MGKYMRKFRGATGEELAAMEVTQVVGVRTRSRSAAAAGATTTKVQAASAASTRRRKALLPTAVVGTTRRDGGSCYLQLRSRMLFMAPPRPAPAARAPVVAEAAGSGNGAAAHAAAGLSRCSSTASSVDAAAQDRSLACRSDVAEAGSEHVPEGSASDSASGRDRERRETTPSSFLPGEVSDLESDLAGGQKRSRPLPSAATASAQQATRPKIPPAAEIEAFFAAAEEAEAKRFAAKYNFDVVRGVPLDAGRFEWTPVVSSRS.

Residues 140–212 (SDVAEAGSEH…SAQQATRPKI (73 aa)) are disordered. The span at 160 to 169 (SGRDRERRET) shows a compositional bias: basic and acidic residues. Positions 198-208 (SAATASAQQAT) are enriched in low complexity.

Belongs to the CDI family. ICK/KRP subfamily.

The chain is Cyclin-dependent kinase inhibitor 1 (KRP1) from Oryza sativa subsp. indica (Rice).